We begin with the raw amino-acid sequence, 462 residues long: 3-isopropylmalate dehydratase large subunit (462 aa).

[4Fe-4S] cluster is bound by residues cysteine 337, cysteine 397, and cysteine 400.

This sequence belongs to the aconitase/IPM isomerase family. LeuC type 1 subfamily. As to quaternary structure, heterodimer of LeuC and LeuD. [4Fe-4S] cluster is required as a cofactor.

The catalysed reaction is (2R,3S)-3-isopropylmalate = (2S)-2-isopropylmalate. The protein operates within amino-acid biosynthesis; L-leucine biosynthesis; L-leucine from 3-methyl-2-oxobutanoate: step 2/4. Catalyzes the isomerization between 2-isopropylmalate and 3-isopropylmalate, via the formation of 2-isopropylmaleate. The polypeptide is 3-isopropylmalate dehydratase large subunit (Listeria monocytogenes serotype 4a (strain HCC23)).